A 199-amino-acid chain; its full sequence is dITP/XTP pyrophosphatase (199 aa).

8-13 (SGNAGK) is a substrate binding site. D69 serves as the catalytic Proton acceptor. D69 provides a ligand contact to Mg(2+). Residues S70, 154–157 (FGYN), K177, and 182–183 (HR) each bind substrate.

This sequence belongs to the HAM1 NTPase family. As to quaternary structure, homodimer. Requires Mg(2+) as cofactor.

The catalysed reaction is XTP + H2O = XMP + diphosphate + H(+). The enzyme catalyses dITP + H2O = dIMP + diphosphate + H(+). It carries out the reaction ITP + H2O = IMP + diphosphate + H(+). Its function is as follows. Pyrophosphatase that catalyzes the hydrolysis of nucleoside triphosphates to their monophosphate derivatives, with a high preference for the non-canonical purine nucleotides XTP (xanthosine triphosphate), dITP (deoxyinosine triphosphate) and ITP. Seems to function as a house-cleaning enzyme that removes non-canonical purine nucleotides from the nucleotide pool, thus preventing their incorporation into DNA/RNA and avoiding chromosomal lesions. The chain is dITP/XTP pyrophosphatase from Xanthomonas campestris pv. campestris (strain 8004).